We begin with the raw amino-acid sequence, 365 residues long: Phosphopantothenate--cysteine ligase CAB2 (365 aa).

The tract at residues Gln-228–Asp-250 is disordered. A compositionally biased stretch (polar residues) spans Asn-238–Thr-248.

The protein belongs to the PPC synthetase family. In terms of assembly, homodimer.

Its subcellular location is the cytoplasm. The protein localises to the nucleus. The catalysed reaction is (R)-4'-phosphopantothenate + L-cysteine + CTP = N-[(R)-4-phosphopantothenoyl]-L-cysteine + CMP + diphosphate + H(+). It participates in cofactor biosynthesis; coenzyme A biosynthesis; CoA from (R)-pantothenate: step 2/5. Catalyzes the first step in the biosynthesis of coenzyme A from vitamin B5, where cysteine is conjugated to 4'-phosphopantothenate to form 4-phosphopantothenoylcysteine. The polypeptide is Phosphopantothenate--cysteine ligase CAB2 (CAB2) (Saccharomyces cerevisiae (strain ATCC 204508 / S288c) (Baker's yeast)).